The primary structure comprises 815 residues: Probable E3 ubiquitin-protein ligase hulA (815 aa).

The C2 domain occupies 1–112; that stretch reads MGSNLPSQPN…EMGGDEMLTR (112 aa). 2 disordered regions span residues 134 to 237 and 253 to 353; these read NLST…GWER and RTTT…YFVD. 2 stretches are compositionally biased toward low complexity: residues 165-185 and 202-212; these read ASAA…SNPS and APGAAAGATPT. 2 stretches are compositionally biased toward polar residues: residues 213–226 and 253–270; these read NTQG…SFED and RTTT…QTQR. One can recognise a WW 1 domain in the interval 229-262; that stretch reads GRLPAGWERREDNLGRTYYVDHNTRTTTWTRPSS. Positions 279–294 are enriched in basic and acidic residues; sequence LERRAHQSRMLPEDRT. Positions 295 to 308 are enriched in polar residues; it reads GANSPNLPETSQQA. Residues 324–333 are compositionally biased toward low complexity; sequence ATGATTAGTG. WW domains lie at 333 to 366 and 393 to 426; these read GELP…DPRR and GPLP…DPRL. An HECT domain is found at 482–815; it reads SASDLKKRLM…VEETLGFGQE (334 aa). C783 (glycyl thioester intermediate) is an active-site residue.

The protein belongs to the RSP5/NEDD4 family. As to quaternary structure, interacts with creD.

It is found in the cytoplasm. The catalysed reaction is S-ubiquitinyl-[E2 ubiquitin-conjugating enzyme]-L-cysteine + [acceptor protein]-L-lysine = [E2 ubiquitin-conjugating enzyme]-L-cysteine + N(6)-ubiquitinyl-[acceptor protein]-L-lysine.. It functions in the pathway protein modification; protein ubiquitination. Functionally, E3 ubiquitin-protein ligase which accepts ubiquitin from an E2 ubiquitin-conjugating enzyme in the form of a thioester and then directly transfers the ubiquitin to targeted substrates. Probably involved in the regulatory network controlling carbon source utilization. This Aspergillus clavatus (strain ATCC 1007 / CBS 513.65 / DSM 816 / NCTC 3887 / NRRL 1 / QM 1276 / 107) protein is Probable E3 ubiquitin-protein ligase hulA (hulA).